A 360-amino-acid chain; its full sequence is Phospho-N-acetylmuramoyl-pentapeptide-transferase (360 aa).

10 helical membrane-spanning segments follow: residues 21–41 (YLSF…LWMG), 73–93 (TMGG…WADL), 94–114 (TNPY…VGFV), 132–152 (WKYF…YAHG), 168–188 (VMPQ…VGTS), 199–219 (GLAI…AWAT), 239–259 (LVVV…FNTY), 263–283 (VFMG…IAVL), 288–308 (FVLV…ILQV), and 338–358 (VIVR…ATLK).

The protein belongs to the glycosyltransferase 4 family. MraY subfamily. Requires Mg(2+) as cofactor.

The protein resides in the cell inner membrane. It carries out the reaction UDP-N-acetyl-alpha-D-muramoyl-L-alanyl-gamma-D-glutamyl-meso-2,6-diaminopimeloyl-D-alanyl-D-alanine + di-trans,octa-cis-undecaprenyl phosphate = di-trans,octa-cis-undecaprenyl diphospho-N-acetyl-alpha-D-muramoyl-L-alanyl-D-glutamyl-meso-2,6-diaminopimeloyl-D-alanyl-D-alanine + UMP. It functions in the pathway cell wall biogenesis; peptidoglycan biosynthesis. Catalyzes the initial step of the lipid cycle reactions in the biosynthesis of the cell wall peptidoglycan: transfers peptidoglycan precursor phospho-MurNAc-pentapeptide from UDP-MurNAc-pentapeptide onto the lipid carrier undecaprenyl phosphate, yielding undecaprenyl-pyrophosphoryl-MurNAc-pentapeptide, known as lipid I. In Vibrio cholerae serotype O1 (strain M66-2), this protein is Phospho-N-acetylmuramoyl-pentapeptide-transferase.